A 263-amino-acid chain; its full sequence is uncharacterized protein (263 aa).

Gly31–Thr38 contributes to the ATP binding site.

This sequence belongs to the CbbQ/NirQ/NorQ/GpvN family.

This is an uncharacterized protein from Staphylococcus aureus (strain USA300).